The primary structure comprises 213 residues: Pyrrolidone-carboxylate peptidase (213 aa).

Catalysis depends on residues E78, C141, and H165.

It belongs to the peptidase C15 family. In terms of assembly, homotetramer.

The protein resides in the cytoplasm. The catalysed reaction is Release of an N-terminal pyroglutamyl group from a polypeptide, the second amino acid generally not being Pro.. In terms of biological role, removes 5-oxoproline from various penultimate amino acid residues except L-proline. The sequence is that of Pyrrolidone-carboxylate peptidase from Clostridium perfringens (strain ATCC 13124 / DSM 756 / JCM 1290 / NCIMB 6125 / NCTC 8237 / Type A).